Here is a 755-residue protein sequence, read N- to C-terminus: Xaa-Pro dipeptidyl-peptidase (755 aa).

Residues serine 348, aspartate 468, and histidine 498 each act as charge relay system in the active site.

It belongs to the peptidase S15 family. As to quaternary structure, homodimer.

The protein resides in the cytoplasm. The catalysed reaction is Hydrolyzes Xaa-Pro-|- bonds to release unblocked, N-terminal dipeptides from substrates including Ala-Pro-|-p-nitroanilide and (sequentially) Tyr-Pro-|-Phe-Pro-|-Gly-Pro-|-Ile.. Its function is as follows. Removes N-terminal dipeptides sequentially from polypeptides having unsubstituted N-termini provided that the penultimate residue is proline. In Streptococcus thermophilus (strain CNRZ 1066), this protein is Xaa-Pro dipeptidyl-peptidase.